The following is a 584-amino-acid chain: Vesicular glutamate transporter 2.1 (584 aa).

At 1-70 the chain is on the cytoplasmic side; it reads METPREPAGF…CTCFGLPRRY (70 aa). Residues 71–91 form a helical membrane-spanning segment; that stretch reads IIAIMSGLGFCISFGIRCNLG. At 92 to 124 the chain is on the vesicular side; the sequence is VAIVSMVNNSTIHLNGKIIIKEKAKFNWDPETV. 2 N-linked (GlcNAc...) asparagine glycosylation sites follow: asparagine 99 and asparagine 100. The chain crosses the membrane as a helical span at residues 125-145; sequence GLIHGSFFWGYIVTQIPGGYI. The Cytoplasmic portion of the chain corresponds to 146–148; the sequence is SSR. Residues 149 to 169 form a helical membrane-spanning segment; that stretch reads LAANRVFGAAILLTSTLNMFI. The Vesicular segment spans residues 170 to 177; the sequence is PSAARGHY. The chain crosses the membrane as a helical span at residues 178–198; that stretch reads GCVIFVRILQGLVEGVTYPAC. The Cytoplasmic portion of the chain corresponds to 199–216; it reads HGIWSKWAPPLERSRLAT. The chain crosses the membrane as a helical span at residues 217–237; it reads TSFCGSYAGAVIAMPLAGILV. Residues 238–244 are Vesicular-facing; that stretch reads QYTGWSS. A helical membrane pass occupies residues 245–265; that stretch reads VFYVYGCFGIFWYMFWILVSY. The Cytoplasmic segment spans residues 266 to 310; it reads ESPAEHPTITAEERCYIEESIGESAKLLGPADKFKTPWRKFFTSM. Residues 311–331 traverse the membrane as a helical segment; it reads PVYAIIVANFCRSWTFYLLLI. The Vesicular portion of the chain corresponds to 332-349; that stretch reads SQPAYFEEVFGFEISKVG. Residues 350 to 370 form a helical membrane-spanning segment; that stretch reads MLSALPHLVMTIIVPIGGQLA. Topologically, residues 371–386 are cytoplasmic; sequence DHLRSKNILSTTTVRK. The chain crosses the membrane as a helical span at residues 387 to 407; that stretch reads IMNCGGFGMEATLLLIVGYSH. Residues 408-409 are Vesicular-facing; it reads SK. The helical transmembrane segment at 410–430 threads the bilayer; that stretch reads GVAISFLVLAVGFSGFAISGF. Residues 431–445 lie on the Cytoplasmic side of the membrane; it reads NVNHLDIAPRYASIL. A helical membrane pass occupies residues 446 to 466; sequence MGISNGVGTLSGMVCPLIVGA. Topologically, residues 467–477 are vesicular; that stretch reads MTKHKTREEWQ. A helical membrane pass occupies residues 478–498; the sequence is YVFLIASLVHYGGVIFYGIFA. Over 499 to 584 the chain is Cytoplasmic; the sequence is SGEKQPWADP…YGYRQGGNYS (86 aa).

It belongs to the major facilitator superfamily. Sodium/anion cotransporter family. VGLUT subfamily. Expressed in spinal cord and retinal ganglion cells.

The protein resides in the cytoplasmic vesicle. It is found in the secretory vesicle. Its subcellular location is the synaptic vesicle membrane. It localises to the membrane. The protein localises to the synapse. The protein resides in the synaptosome. It is found in the cell membrane. The enzyme catalyses L-glutamate(out) = L-glutamate(in). The catalysed reaction is 3 Na(+)(out) + phosphate(out) = 3 Na(+)(in) + phosphate(in). It catalyses the reaction phosphate(in) = phosphate(out). It carries out the reaction K(+)(in) + H(+)(out) = K(+)(out) + H(+)(in). The enzyme catalyses chloride(in) = chloride(out). With respect to regulation, chloride channel activity is allosterically activated by lumenal H(+) and Cl(-) leading to synaptic vesicles acidification. The L-glutamate transport activity is allosterically activated by lumenal H(+) and Cl(-). The allosteric requirement for H(+) efficiently prevents non-vesicular efflux across the plasma membrane. The L-glutamate uniporter activity exhibits a biphasic dependence on chloride concentration. In terms of biological role, multifunctional transporter that transports L-glutamate as well as multiple ions such as chloride, proton, potassium, sodium and phosphate. At the synaptic vesicle membrane, mainly functions as a uniporter which transports preferentially L-glutamate but also, phosphate from the cytoplasm into synaptic vesicles at presynaptic nerve terminals of excitatory neural cells. The L-glutamate or phosphate uniporter activity is electrogenic and is driven by the proton electrochemical gradient, mainly by the electrical gradient established by the vacuolar H(+)-ATPase across the synaptic vesicle membrane. In addition, functions as a chloride channel that allows a chloride permeation through the synaptic vesicle membrane therefore affects the proton electrochemical gradient and promotes synaptic vesicles acidification. Moreover, functions as a vesicular K(+)/H(+) antiport allowing to maintain the electrical gradient and to decrease chemical gradient and therefore sustain vesicular L-glutamate uptake. The vesicular H(+)/H(+) antiport activity is electroneutral. At the plasma membrane, following exocytosis, functions as a symporter of Na(+) and phosphate from the extracellular space to the cytoplasm allowing synaptic phosphate homeostasis regulation. The symporter activity is driven by an inside negative membrane potential and is electrogenic. Also involved in the regulation of retinal hyaloid vessel regression during postnatal development. May also play a role in the endocrine L-glutamatergic system of other tissues such as pineal gland and pancreas. Required for glutamate release by retinotectal synapses and visual acuity. This Danio rerio (Zebrafish) protein is Vesicular glutamate transporter 2.1 (slc17a6b).